The chain runs to 103 residues: NAD(P)H-quinone oxidoreductase subunit 4L (103 aa).

The next 3 helical transmembrane spans lie at 5-25 (LQYC…GLIT), 32-52 (VLMS…GFSN), and 66-86 (IFVI…VLAI).

This sequence belongs to the complex I subunit 4L family. In terms of assembly, NDH-1 can be composed of about 15 different subunits; different subcomplexes with different compositions have been identified which probably have different functions.

The protein resides in the cellular thylakoid membrane. It carries out the reaction a plastoquinone + NADH + (n+1) H(+)(in) = a plastoquinol + NAD(+) + n H(+)(out). The enzyme catalyses a plastoquinone + NADPH + (n+1) H(+)(in) = a plastoquinol + NADP(+) + n H(+)(out). Its function is as follows. NDH-1 shuttles electrons from an unknown electron donor, via FMN and iron-sulfur (Fe-S) centers, to quinones in the respiratory and/or the photosynthetic chain. The immediate electron acceptor for the enzyme in this species is believed to be plastoquinone. Couples the redox reaction to proton translocation, and thus conserves the redox energy in a proton gradient. Cyanobacterial NDH-1 also plays a role in inorganic carbon-concentration. The polypeptide is NAD(P)H-quinone oxidoreductase subunit 4L (Synechocystis sp. (strain ATCC 27184 / PCC 6803 / Kazusa)).